The sequence spans 597 residues: DDB1- and CUL4-associated factor 8 (597 aa).

The span at 1-24 (MSSKGSSTDGRTDLANGSLSSSPE) shows a compositional bias: polar residues. A disordered region spans residues 1 to 147 (MSSKGSSTDG…DWVSSETSAL (147 aa)). Serine 21 and serine 22 each carry phosphoserine. A Nuclear export signal motif is present at residues 39–50 (IEVEASDLSLSL). Positions 65–99 (RGTDTESSGEDKDSDSMEDTGHYSINDENRVHDRS) are enriched in basic and acidic residues. The residue at position 99 (serine 99) is a Phosphoserine. Positions 100–112 (EEEEEEEEEEEEE) are enriched in acidic residues. The short motif at 114–122 (PRRRVQRKR) is the Nuclear localization signal element. A compositionally biased stretch (basic and acidic residues) spans 124–137 (NRDQDSSDDERALE). A phosphoserine mark is found at serine 129 and serine 130. 7 WD repeats span residues 191–230 (GHTG…PVLD), 234–275 (GHKS…CCKN), 281–321 (QHKG…PASK), 329–369 (EKKV…ENEN), 385–424 (ESKA…GAQY), 432–472 (RNNA…IIQF), and 476–515 (DKGG…STEL). The residue at position 204 (arginine 204) is an Omega-N-methylarginine; by PRMT1. The segment at 558 to 597 (HRRWREPGVGATDADSDESPSSSDTSDEEEGPDRVQCMPS) is disordered.

The protein belongs to the WD repeat DCAF8 family. As to quaternary structure, interacts with DDB1, CUL4A and CUL4B. Interacts with KPNA1, KPNB1 and XPO1.

The protein localises to the nucleus. The protein resides in the cytoplasm. It functions in the pathway protein modification; protein ubiquitination. Its function is as follows. May function as a substrate receptor for CUL4-DDB1 E3 ubiquitin-protein ligase complex. The protein is DDB1- and CUL4-associated factor 8 (DCAF8) of Homo sapiens (Human).